A 360-amino-acid chain; its full sequence is Histidinol-phosphate aminotransferase (360 aa).

Lysine 222 is modified (N6-(pyridoxal phosphate)lysine).

The protein belongs to the class-II pyridoxal-phosphate-dependent aminotransferase family. Histidinol-phosphate aminotransferase subfamily. Homodimer. Pyridoxal 5'-phosphate serves as cofactor.

It catalyses the reaction L-histidinol phosphate + 2-oxoglutarate = 3-(imidazol-4-yl)-2-oxopropyl phosphate + L-glutamate. The protein operates within amino-acid biosynthesis; L-histidine biosynthesis; L-histidine from 5-phospho-alpha-D-ribose 1-diphosphate: step 7/9. The sequence is that of Histidinol-phosphate aminotransferase from Listeria monocytogenes serotype 4b (strain CLIP80459).